Here is a 78-residue protein sequence, read N- to C-terminus: Hainantoxin-XX (78 aa).

An N-terminal signal peptide occupies residues 1–23; that stretch reads MKSATLLALSFLLIALYFLICEA. A propeptide spanning residues 24-47 is cleaved from the precursor; sequence EHSRYEEHEILEENMGDVVNLEQR. Cystine bridges form between Cys49–Cys62, Cys56–Cys66, and Cys61–Cys77.

It belongs to the hainantoxin family. 20 subfamily. As to expression, expressed by the venom gland.

It is found in the secreted. Its function is as follows. Putative ion channel inhibitor. This Cyriopagopus hainanus (Chinese bird spider) protein is Hainantoxin-XX.